A 299-amino-acid polypeptide reads, in one-letter code: NAD kinase (299 aa).

The active-site Proton acceptor is Asp75. Residues 75 to 76 (DG), 149 to 150 (ND), Arg177, Asp179, 190 to 195 (TAYALS), Ala214, and Gln248 contribute to the NAD(+) site.

The protein belongs to the NAD kinase family. A divalent metal cation is required as a cofactor.

The protein resides in the cytoplasm. It carries out the reaction NAD(+) + ATP = ADP + NADP(+) + H(+). In terms of biological role, involved in the regulation of the intracellular balance of NAD and NADP, and is a key enzyme in the biosynthesis of NADP. Catalyzes specifically the phosphorylation on 2'-hydroxyl of the adenosine moiety of NAD to yield NADP. This chain is NAD kinase, found in Burkholderia thailandensis (strain ATCC 700388 / DSM 13276 / CCUG 48851 / CIP 106301 / E264).